Here is a 411-residue protein sequence, read N- to C-terminus: Mannan endo-1,4-beta-mannosidase 1 (411 aa).

The N-terminal stretch at M1–G17 is a signal peptide. The N-linked (GlcNAc...) asparagine glycan is linked to N33. Residues W87 and N197 each contribute to the substrate site. E198 (proton donor) is an active-site residue. Residue N202 is glycosylated (N-linked (GlcNAc...) asparagine). Y277 provides a ligand contact to substrate. The Nucleophile role is filled by E319. W361 contacts substrate. N366 and N384 each carry an N-linked (GlcNAc...) asparagine glycan.

It belongs to the glycosyl hydrolase 5 (cellulase A) family. As to expression, expressed in roots, stems and flowers.

Its subcellular location is the secreted. The catalysed reaction is Random hydrolysis of (1-&gt;4)-beta-D-mannosidic linkages in mannans, galactomannans and glucomannans.. The polypeptide is Mannan endo-1,4-beta-mannosidase 1 (MAN1) (Arabidopsis thaliana (Mouse-ear cress)).